The sequence spans 277 residues: Radial spoke head protein 9 homolog (277 aa).

Belongs to the flagellar radial spoke RSP9 family. In terms of assembly, component of axonemal radial spoke complexes.

It is found in the cytoplasm. The protein localises to the cytoskeleton. Its subcellular location is the cilium axoneme. The protein resides in the flagellum axoneme. It localises to the cell projection. It is found in the kinocilium. Functions as part of axonemal radial spoke complexes that play an important part in the motility of sperm and cilia. Required for motility of olfactory and neural cilia and for the structural integrity of ciliary axonemes in both 9+0 and 9+2 motile cilia. Essential for both the radial spoke head assembly and the central pair microtubule stability in ependymal motile cilia. This Danio rerio (Zebrafish) protein is Radial spoke head protein 9 homolog (rsph9).